The primary structure comprises 60 residues: Large ribosomal subunit protein uL30 (60 aa).

The protein belongs to the universal ribosomal protein uL30 family. In terms of assembly, part of the 50S ribosomal subunit.

The protein is Large ribosomal subunit protein uL30 of Baumannia cicadellinicola subsp. Homalodisca coagulata.